A 222-amino-acid chain; its full sequence is Twisted gastrulation protein homolog 1 (222 aa).

Positions 1–24 (MKSHYIVLALASLTFLLCLPVSQS) are cleaved as a signal peptide. N-linked (GlcNAc...) asparagine glycans are attached at residues asparagine 80 and asparagine 146.

The protein belongs to the twisted gastrulation protein family. As to quaternary structure, interacts with CHRD and/or BMP4. This interaction enhances CHRD/BMP4 complex formation. Interacts with BMP7. In terms of tissue distribution, expressed in lymph node, liver, kidney, and lung. Expression in the kidney was stronger in the medulla than in the cortex, particularly in the cells surrounding the medullary tubules. Expressed in growth plate cartilage of long bones, ribs, and digits and to a lesser extent also in the resting zone of the epiphysis, trabecular bone, and vertebral cartilage. Expression seems to be absent from other skeletal tissues including muscle, skin, and fibroblasts.

The protein localises to the secreted. Functionally, may be involved in dorsoventral axis formation. Seems to antagonize BMP signaling by forming ternary complexes with CHRD and BMPs, thereby preventing BMPs from binding to their receptors. In addition to the anti-BMP function, also has pro-BMP activity, partly mediated by cleavage and degradation of CHRD, which releases BMPs from ternary complexes. May be an important modulator of BMP-regulated cartilage development and chondrocyte differentiation. May play a role in thymocyte development. The sequence is that of Twisted gastrulation protein homolog 1 (Twsg1) from Mus musculus (Mouse).